An 84-amino-acid chain; its full sequence is Large ribosomal subunit protein bL27 (84 aa).

This sequence belongs to the bacterial ribosomal protein bL27 family.

This chain is Large ribosomal subunit protein bL27, found in Karelsulcia muelleri (strain GWSS) (Sulcia muelleri).